The chain runs to 177 residues: Ubiquinol-cytochrome c reductase iron-sulfur subunit (177 aa).

The helical transmembrane segment at 18–38 (IVLTASSVAAVGAACAFWPII) threads the bilayer. The Rieske domain occupies 88–175 (ARAVKMSELI…YIFISDKKIR (88 aa)). 4 residues coordinate [2Fe-2S] cluster: Cys120, His122, Cys139, and His142. A disulfide bridge connects residues Cys125 and Cys141.

This sequence belongs to the Rieske iron-sulfur protein family. In terms of assembly, the main subunits of complex b-c1 are: cytochrome b, cytochrome c1 and the Rieske protein. It depends on [2Fe-2S] cluster as a cofactor.

It localises to the cell membrane. The catalysed reaction is a quinol + 2 Fe(III)-[cytochrome c](out) = a quinone + 2 Fe(II)-[cytochrome c](out) + 2 H(+)(out). Component of the ubiquinol-cytochrome c reductase complex (complex III or cytochrome b-c1 complex), which is a respiratory chain that generates an electrochemical potential coupled to ATP synthesis. The polypeptide is Ubiquinol-cytochrome c reductase iron-sulfur subunit (petA) (Rickettsia prowazekii (strain Madrid E)).